Consider the following 514-residue polypeptide: Synaptic vesicular amine transporter (514 aa).

Residues 1–20 (MALSELALVRWLQESRRSRK) lie on the Cytoplasmic side of the membrane. A helical membrane pass occupies residues 21-41 (LILFIVFLALLLDNMLLTVVV). At 42-129 (PIIPSYLYSI…EDKDLLNENV (88 aa)) the chain is on the lumenal, vesicle side. Residues Asn-84 and Asn-91 are each glycosylated (N-linked (GlcNAc...) asparagine). Cys-117 and Cys-324 are joined by a disulfide. Residues 130–150 (QVGLLFASKATVQLITNPFIG) traverse the membrane as a helical segment. The Cytoplasmic segment spans residues 151-159 (LLTNRIGYP). A helical transmembrane segment spans residues 160–180 (IPIFAGFCIMFVSTIMFAFSS). The Lumenal, vesicle segment spans residues 181–189 (SYAFLLIAR). The chain crosses the membrane as a helical span at residues 190–210 (SLQGIGSSCSSVAGMGMLASV). Residues 211 to 219 (YTDDEERGN) are Cytoplasmic-facing. Residues 220 to 242 (VMGIALGGLAMGVLVGPPFGSVL) form a helical membrane-spanning segment. Serotonin is bound by residues Leu-228 and Val-232. At 243-248 (YEFVGK) the chain is on the lumenal, vesicle side. The chain crosses the membrane as a helical span at residues 249–271 (TAPFLVLAALVLLDGAIQLFVLQ). Residues 272 to 291 (PSRVQPESQKGTPLTTLLKD) are Cytoplasmic-facing. Residues 292–311 (PYILIAAGSICFANMGIAML) form a helical membrane-spanning segment. Serotonin-binding residues include Asn-305, Ile-308, Glu-312, Phe-334, and Tyr-341. The Lumenal, vesicle segment spans residues 312-328 (EPALPIWMMETMCSRKW). Residues 329–352 (QLGVAFLPASISYLIGTNIFGILA) form a helical membrane-spanning segment. Residues 353–357 (HKMGR) are Cytoplasmic-facing. The helical transmembrane segment at 358 to 378 (WLCALLGMIIVGVSILCIPFA) threads the bilayer. The Lumenal, vesicle segment spans residues 379-389 (KNIYGLIAPNF). A helical transmembrane segment spans residues 390–410 (GVGFAIGMVDSSMMPIMGYLV). Asp-399 lines the serotonin pocket. Topologically, residues 411–414 (DLRH) are cytoplasmic. Residues 415–435 (VSVYGSVYAIADVAFCMGYAI) form a helical membrane-spanning segment. Tyr-433 contributes to the serotonin binding site. The Lumenal, vesicle portion of the chain corresponds to 436–440 (GPSAG). A helical transmembrane segment spans residues 441–462 (GAIAKAIGFPWLMTIIGIIDIL). At 463 to 514 (FAPLCFFLRSPPAKEEKMAILMDHNCPIKTKMYTQNNIQSYPIGEDEESESD) the chain is on the cytoplasmic side. Phosphoserine occurs at positions 511 and 513.

Belongs to the major facilitator superfamily. Vesicular transporter family. As to quaternary structure, interacts with SLC6A3. In terms of tissue distribution, expressed in neuronal and neuroendocrine tissues. Detected in central and peripheral nervous system in particular in axonal and dendritic processes in dopaminergic cells of substantia nigra, histaminergic neuronal cell bodies of substantia nigra and tuberomammillary nucleus, in ganglion cells of sympathetic glia and in peripheral sympathetic nerve terminals in stomach and duodenum (at protein level). Highly expressed in chromaffin cells of the adrenal medulla and histamine-storing enterochromaffin-like cells of oxyntic mucosa (at protein level).

It is found in the cytoplasmic vesicle. The protein resides in the secretory vesicle. Its subcellular location is the synaptic vesicle membrane. The protein localises to the secretory vesicle membrane. It localises to the cell projection. It is found in the axon. The protein resides in the dendrite. The catalysed reaction is serotonin(in) + 2 H(+)(out) = serotonin(out) + 2 H(+)(in). It catalyses the reaction dopamine(in) + 2 H(+)(out) = dopamine(out) + 2 H(+)(in). The enzyme catalyses histamine(in) + 2 H(+)(out) = histamine(out) + 2 H(+)(in). Its activity is regulated as follows. Strongly inhibited by reserpine and tetrabenazine. Also inhibited to a lesser extent by ketanserin and fenfluramine. Reserpine and ketanserin inhibit by blocking the substrate-binding pocket. Tetrabenazine traps SLC18A2/VMAT2 in an occluded conformation and its inhibition is specific to SLC18A2/VMAT2 but not SLC18A1/VMAT1. In terms of biological role, electrogenic antiporter that exchanges one cationic monoamine with two intravesicular protons across the membrane of secretory and synaptic vesicles. Uses the electrochemical proton gradient established by the V-type proton-pump ATPase to accumulate high concentrations of monoamines inside the vesicles prior to their release via exocytosis. Transports a variety of catecholamines such as dopamine, adrenaline and noradrenaline, histamine, and indolamines such as serotonin. Regulates the transvesicular monoaminergic gradient that determines the quantal size. Mediates somatodendritic dopamine release in hippocampal neurons, likely as part of a regulated secretory pathway that integrates retrograde synaptic signals. Acts as a primary transporter for striatal dopamine loading ensuring impulse-dependent release of dopamine at the synaptic cleft. Responsible for histamine and serotonin storage and subsequent corelease from mast cell granules. This is Synaptic vesicular amine transporter (SLC18A2) from Homo sapiens (Human).